The following is a 170-amino-acid chain: Adenine phosphoribosyltransferase (170 aa).

This sequence belongs to the purine/pyrimidine phosphoribosyltransferase family. As to quaternary structure, homodimer.

It is found in the cytoplasm. It catalyses the reaction AMP + diphosphate = 5-phospho-alpha-D-ribose 1-diphosphate + adenine. It participates in purine metabolism; AMP biosynthesis via salvage pathway; AMP from adenine: step 1/1. Catalyzes a salvage reaction resulting in the formation of AMP, that is energically less costly than de novo synthesis. The protein is Adenine phosphoribosyltransferase of Streptococcus pneumoniae (strain Taiwan19F-14).